The primary structure comprises 391 residues: Zinc finger protein ubi-d4 (391 aa).

Ala2 carries the N-acetylalanine modification. Residues Lys10, Lys99, Lys107, and Lys108 each participate in a glycyl lysine isopeptide (Lys-Gly) (interchain with G-Cter in SUMO2) cross-link. 2 disordered regions span residues 79-147 and 165-199; these read WRKK…GEFP and DDLD…KLDA. 2 stretches are compositionally biased toward basic and acidic residues: residues 100-110 and 126-140; these read PDTDQTLKKEG and DPLE…RVDD. The residue at position 142 (Ser142) is a Phosphoserine. The segment covering 165–174 has biased composition (acidic residues); the sequence is DDLDDEDYEE. Position 172 is a phosphotyrosine (Tyr172). Thr176 carries the phosphothreonine modification. Residues Lys178 and Lys196 each participate in a glycyl lysine isopeptide (Lys-Gly) (interchain with G-Cter in SUMO2) cross-link. Residue Ser200 is modified to Phosphoserine. The segment at 209–232 adopts a C2H2-type zinc-finger fold; sequence YACDICGKRYKNRPGLSYHYAHSH. Residues 233–266 are disordered; sequence LAEEEGEDKEDSRPPTPVSQRSEEQKSKKGPDGL. Ser244 bears the Phosphoserine mark. The span at 253–263 shows a compositional bias: basic and acidic residues; sequence RSEEQKSKKGP. 2 consecutive PHD-type zinc fingers follow at residues 270-330 and 327-377; these read NNYC…CKCC and CKCC…CLDL. Ser280 is subject to Phosphoserine. Lys281 participates in a covalent cross-link: Glycyl lysine isopeptide (Lys-Gly) (interchain with G-Cter in SUMO2).

This sequence belongs to the requiem/DPF family. As to quaternary structure, interacts with the nucleosomes, in particular nucleosomes bearing histone H3 crotonylated at 'Lys-14' (H3K14cr) for which DPF2 has high affinity. Also interacts (via PHD-type zinc finger domains) with histone H3 butyrylated at 'Lys-14' (H3K14bu), histone H3 propionylated at 'Lys-14' (H3K14pr), and histone H3 acetylated at 'Lys-14' (H3K14ac). Interacts with histone H3 acetylated at 'Lys-9' (H3K9ac), histone H3 di-methylated at 'Lys-9' (H3K9me2), and histone H3 tri-methylated at 'Lys-9' (H3K9me3). Interacts with histone H4 acetylated at 'Lys-12' (H4K12ac). Interacts with histone H4 acetylated at 'Lys-16' (H4K16ac). Interacts with SWI/SNF complex components. Interacts with SMARCA2, SMARCA4, SMARCB1 and SMARCD1. Interacts with SMARCC1, SMARCC2 and ACTL6A. Interacts with RUNX1. In embryo, highest levels are seen in brain, eyes, thymus and olfactory epithelium in nose, whereas several other tissues, including the musculoskeletal system, show moderate expression. In adult, higher expression in testis, medium in thymus and spleen, lower in certain parts of the brain as the hippocampus. No expression in adult heart, lung, liver, duodenum and kidney.

It localises to the nucleus. It is found in the cytoplasm. In terms of biological role, plays an active role in transcriptional regulation by binding modified histones H3 and H4. Is a negative regulator of myeloid differentiation of hematopoietic progenitor cells. Might also have a role in the development and maturation of lymphoid cells. Involved in the regulation of non-canonical NF-kappa-B pathway. The chain is Zinc finger protein ubi-d4 (Dpf2) from Mus musculus (Mouse).